Here is a 702-residue protein sequence, read N- to C-terminus: MIRTFEMELGGRPFVVELGKVAELAQGSCMIKYGDTFVLVTACASKEPKEGLDFFPLSCDYEEKLYAVGKIPGGFIKRESRPSEKATLTARLIDRPIRPLFPKGYHNDVQVIATVLSVDQDCPPDISAMIGSSIALSVSNIPFMGPTASVSVGMIDGEYIVNPTSEQKELSELELIVSGTKDAVMMIEAGANELTEAQILDAIMFAHEEIKKIVTFIEHIVSEVGKPKSEVIVKETDSELLAEVVSFLDTKLANAIKTVDKTERNENIKAISAEALDYFEEKYEGRSKEVNTILSKQIKVETRKMITSEGIRPDNRKLDEIRPISSEVGILPRTHGTGLFTRGETQVLTVTTLGDLRDAQRIDGLGEEDEKRYMHHYNFPPYSVGETRFMRGPSRREIGHGALVERALKPMIPCKEDFPYAIRLVSEVLACNGSSSQASVCGSTLSLMDAGVPIKGMVAGIAMGLIKEEGQIAILSDIQGMEDALGDMDLKVAGTENGITALQMDIKIAGIDRNIMETALAQAKIGRTHILNKMKEAITSPRTELSAYAPQVTKLKVHPDKVREVIGAGGKVINKIIDETGVKINIENDGTIYIAAPDQESARVALEMIELIVKDPVVGEVYTGKVIKIMDFGAFVEILPGKEGLVHISNLAHERVAKVADVLAEGDLIEVKLMEINPQGKIGLSRKALLPKPEKEAPNKVE.

Mg(2+)-binding residues include Asp483 and Asp489. In terms of domain architecture, KH spans 550–609 (PQVTKLKVHPDKVREVIGAGGKVINKIIDETGVKINIENDGTIYIAAPDQESARVALEMI). The 69-residue stretch at 619 to 687 (GEVYTGKVIK…PQGKIGLSRK (69 aa)) folds into the S1 motif domain.

The protein belongs to the polyribonucleotide nucleotidyltransferase family. Mg(2+) is required as a cofactor.

Its subcellular location is the cytoplasm. The enzyme catalyses RNA(n+1) + phosphate = RNA(n) + a ribonucleoside 5'-diphosphate. Its function is as follows. Involved in mRNA degradation. Catalyzes the phosphorolysis of single-stranded polyribonucleotides processively in the 3'- to 5'-direction. The chain is Polyribonucleotide nucleotidyltransferase 1 from Alkaliphilus metalliredigens (strain QYMF).